A 507-amino-acid polypeptide reads, in one-letter code: ATP synthase subunit alpha, chloroplastic (507 aa).

ATP is bound at residue 170–177 (GDRQTGKT).

Belongs to the ATPase alpha/beta chains family. F-type ATPases have 2 components, CF(1) - the catalytic core - and CF(0) - the membrane proton channel. CF(1) has five subunits: alpha(3), beta(3), gamma(1), delta(1), epsilon(1). CF(0) has four main subunits: a, b, b' and c.

The protein localises to the plastid. It localises to the chloroplast thylakoid membrane. The enzyme catalyses ATP + H2O + 4 H(+)(in) = ADP + phosphate + 5 H(+)(out). Functionally, produces ATP from ADP in the presence of a proton gradient across the membrane. The alpha chain is a regulatory subunit. In Dioscorea elephantipes (Elephant's foot yam), this protein is ATP synthase subunit alpha, chloroplastic.